The sequence spans 360 residues: Ribosomal RNA large subunit methyltransferase M (360 aa).

S-adenosyl-L-methionine contacts are provided by residues S190, C223 to G226, D242, D262, and D280. K309 acts as the Proton acceptor in catalysis.

Belongs to the class I-like SAM-binding methyltransferase superfamily. RNA methyltransferase RlmE family. RlmM subfamily. As to quaternary structure, monomer.

Its subcellular location is the cytoplasm. It catalyses the reaction cytidine(2498) in 23S rRNA + S-adenosyl-L-methionine = 2'-O-methylcytidine(2498) in 23S rRNA + S-adenosyl-L-homocysteine + H(+). Functionally, catalyzes the 2'-O-methylation at nucleotide C2498 in 23S rRNA. This Haemophilus ducreyi (strain 35000HP / ATCC 700724) protein is Ribosomal RNA large subunit methyltransferase M.